The following is a 393-amino-acid chain: Phosphoglycerate kinase (393 aa).

Substrate contacts are provided by residues 22–24 (DFN), R37, 60–63 (HLGR), R119, and R152. ATP-binding positions include K202, G293, E324, and 350 to 353 (GGDS).

The protein belongs to the phosphoglycerate kinase family. In terms of assembly, monomer.

Its subcellular location is the cytoplasm. It catalyses the reaction (2R)-3-phosphoglycerate + ATP = (2R)-3-phospho-glyceroyl phosphate + ADP. Its pathway is carbohydrate degradation; glycolysis; pyruvate from D-glyceraldehyde 3-phosphate: step 2/5. This chain is Phosphoglycerate kinase, found in Borreliella burgdorferi (strain ZS7) (Borrelia burgdorferi).